A 201-amino-acid polypeptide reads, in one-letter code: MAQGPSQCPALLGAPASTTDGTQEARVPLDGAFWIPRPPAGSPKGCFACVSKPPALQAAAAPAPEPSASPPMAPTLFPMESKSSKTDSVRASGVPQACKHLAEKKTMTNPTTVIEVYPDTTEVNDYYLWSIFNFVYLNFCCLGFIALAYSLKVRDKKLLNDLNGAVEDAKTARLFNITSSALAASCIILIFIFLRYPLTDY.

2 disordered regions span residues 1-23 and 60-88; these read MAQGPSQCPALLGAPASTTDGTQ and AAPAPEPSASPPMAPTLFPMESKSSKTDS. At 1 to 127 the chain is on the extracellular side; that stretch reads MAQGPSQCPA…PDTTEVNDYY (127 aa). Residues 63 to 73 are compositionally biased toward pro residues; it reads APEPSASPPMA. The helical transmembrane segment at 128–148 threads the bilayer; that stretch reads LWSIFNFVYLNFCCLGFIALA. Residues Cys-140 and Cys-141 are each lipidated (S-palmitoyl cysteine). At 149 to 173 the chain is on the cytoplasmic side; that stretch reads YSLKVRDKKLLNDLNGAVEDAKTAR. A helical transmembrane segment spans residues 174–194; sequence LFNITSSALAASCIILIFIFL. Residues 195–201 are Extracellular-facing; sequence RYPLTDY.

Belongs to the CD225/Dispanin family.

The protein resides in the cell membrane. The chain is Interferon-induced transmembrane protein 10 (Ifitm10) from Mus musculus (Mouse).